The sequence spans 289 residues: Phosphatidylserine decarboxylase proenzyme (289 aa).

Catalysis depends on charge relay system; for autoendoproteolytic cleavage activity residues Asp88, His145, and Ser251. Ser251 functions as the Schiff-base intermediate with substrate; via pyruvic acid; for decarboxylase activity in the catalytic mechanism. Ser251 is modified (pyruvic acid (Ser); by autocatalysis).

The protein belongs to the phosphatidylserine decarboxylase family. PSD-B subfamily. Prokaryotic type I sub-subfamily. In terms of assembly, heterodimer of a large membrane-associated beta subunit and a small pyruvoyl-containing alpha subunit. Requires pyruvate as cofactor. Post-translationally, is synthesized initially as an inactive proenzyme. Formation of the active enzyme involves a self-maturation process in which the active site pyruvoyl group is generated from an internal serine residue via an autocatalytic post-translational modification. Two non-identical subunits are generated from the proenzyme in this reaction, and the pyruvate is formed at the N-terminus of the alpha chain, which is derived from the carboxyl end of the proenzyme. The autoendoproteolytic cleavage occurs by a canonical serine protease mechanism, in which the side chain hydroxyl group of the serine supplies its oxygen atom to form the C-terminus of the beta chain, while the remainder of the serine residue undergoes an oxidative deamination to produce ammonia and the pyruvoyl prosthetic group on the alpha chain. During this reaction, the Ser that is part of the protease active site of the proenzyme becomes the pyruvoyl prosthetic group, which constitutes an essential element of the active site of the mature decarboxylase.

Its subcellular location is the cell membrane. It carries out the reaction a 1,2-diacyl-sn-glycero-3-phospho-L-serine + H(+) = a 1,2-diacyl-sn-glycero-3-phosphoethanolamine + CO2. It functions in the pathway phospholipid metabolism; phosphatidylethanolamine biosynthesis; phosphatidylethanolamine from CDP-diacylglycerol: step 2/2. Catalyzes the formation of phosphatidylethanolamine (PtdEtn) from phosphatidylserine (PtdSer). In Polaromonas naphthalenivorans (strain CJ2), this protein is Phosphatidylserine decarboxylase proenzyme.